The primary structure comprises 416 residues: Lipase (416 aa).

A signal peptide spans 1-28; that stretch reads MKCCRIMFVLLGLWFVFGLSVPGGRTEA. The Nucleophile role is filled by Ser-141. Gly-314 is a binding site for Ca(2+). The Charge relay system role is filled by Asp-345. Asp-385 lines the Ca(2+) pocket. Residue His-386 is the Charge relay system of the active site. The Ca(2+) site is built by Glu-388, Asp-393, and Pro-394.

It belongs to the AB hydrolase superfamily. In terms of assembly, homodimer.

It localises to the secreted. It catalyses the reaction a triacylglycerol + H2O = a diacylglycerol + a fatty acid + H(+). Its activity is regulated as follows. Activity is inhibited by zinc and iron ions, and activated in vitro in 25% v/v DMSO and acetone. Functionally, triacylglycerol hydrolase that shows hydrolysis preference towards some of the natural oils such as olive, sunflower and corn oils. The sequence is that of Lipase from Bacillus sp.